The following is a 367-amino-acid chain: Alanine racemase (367 aa).

Residue K40 is the Proton acceptor; specific for D-alanine of the active site. K40 bears the N6-(pyridoxal phosphate)lysine mark. R136 serves as a coordination point for substrate. Y263 acts as the Proton acceptor; specific for L-alanine in catalysis. M310 serves as a coordination point for substrate.

The protein belongs to the alanine racemase family. Requires pyridoxal 5'-phosphate as cofactor.

It carries out the reaction L-alanine = D-alanine. The protein operates within amino-acid biosynthesis; D-alanine biosynthesis; D-alanine from L-alanine: step 1/1. Catalyzes the interconversion of L-alanine and D-alanine. May also act on other amino acids. This Streptococcus thermophilus (strain ATCC BAA-250 / LMG 18311) protein is Alanine racemase (alr).